We begin with the raw amino-acid sequence, 154 residues long: Actin-related protein 2/3 complex subunit 5 (154 aa).

A Phosphothreonine modification is found at Thr142.

It belongs to the ARPC5 family. As to quaternary structure, component of the Arp2/3 complex composed of ARP2, ARP3, ARC40/p41-ARC, ARC35/p34-ARC, ARC18/p21-ARC, ARC19/p20-ARC and ARC16/p16-ARC.

It is found in the cytoplasm. It localises to the cytoskeleton. The protein localises to the actin patch. In terms of biological role, functions as a component of the Arp2/3 complex which is involved in regulation of actin polymerization and together with an activating nucleation-promoting factor (NPF) mediates the formation of branched actin networks. The protein is Actin-related protein 2/3 complex subunit 5 (ARC15) of Saccharomyces cerevisiae (strain ATCC 204508 / S288c) (Baker's yeast).